A 617-amino-acid polypeptide reads, in one-letter code: Estrogen receptor (617 aa).

Residues Met-1–His-54 are disordered. The tract at residues Met-1–Tyr-186 is modulating. 2 NR C4-type zinc fingers span residues Cys-187–Cys-207 and Cys-223–Cys-247. The segment at residues Cys-187–Met-252 is a DNA-binding region (nuclear receptor). The hinge stretch occupies residues Met-253–Met-315. Positions Asn-269 to Ser-303 are disordered. In terms of domain architecture, NR LBD spans Ser-316–His-552. The disordered stretch occupies residues Val-568 to Pro-617. A compositionally biased stretch (low complexity) spans Thr-573–Thr-591. Positions Ser-606–Pro-617 are enriched in pro residues.

This sequence belongs to the nuclear hormone receptor family. NR3 subfamily. As to quaternary structure, binds DNA as a homodimer. Can form a heterodimer with ER-beta. Ovary and testis.

It localises to the nucleus. Functionally, the steroid hormones and their receptors are involved in the regulation of eukaryotic gene expression and affect cellular proliferation and differentiation in target tissues. The chain is Estrogen receptor (esr1) from Ictalurus punctatus (Channel catfish).